The sequence spans 1110 residues: cGMP-specific 3',5'-cyclic phosphodiesterase (1110 aa).

Composition is skewed to low complexity over residues 1–25 and 35–55; these read MTDV…SSAS and TSTA…ASGA. 3 disordered regions span residues 1–55, 67–128, and 184–203; these read MTDV…ASGA, ISNQ…QQDV, and ASPT…SASS. Residues 88-103 are compositionally biased toward pro residues; the sequence is APYPPVPAAKPKPTPT. The span at 192 to 203 shows a compositional bias: low complexity; sequence SPRSLSNSSASS. GAF domains lie at 233–385 and 417–601; these read DIDV…GIGI and NLEC…GLGI. The 324-residue stretch at 631–954 folds into the PDEase domain; that stretch reads SQDQTEKLTQ…RNWQDLAEKV (324 aa). His-707 acts as the Proton donor in catalysis. Positions 711, 747, 748, and 858 each coordinate a divalent metal cation. Disordered regions lie at residues 997–1028 and 1040–1110; these read AQHG…TGAL and LYNS…CSLL. Composition is skewed to basic and acidic residues over residues 1006–1015 and 1056–1068; these read DDSHTPEHQR and LESH…DDKS. Residues 1082–1097 show a composition bias toward low complexity; the sequence is GRMSASSSTSSAGTVV. The span at 1100–1110 shows a compositional bias: basic residues; the sequence is SKKRSKLCSLL. Residue Cys-1107 is modified to Cysteine methyl ester. Cys-1107 is lipidated: S-farnesyl cysteine. The propeptide at 1108–1110 is removed in mature form; that stretch reads SLL.

This sequence belongs to the cyclic nucleotide phosphodiesterase family. Interacts with PrBP. It depends on a divalent metal cation as a cofactor.

The protein resides in the cell membrane. The enzyme catalyses 3',5'-cyclic GMP + H2O = GMP + H(+). Has a role regulating cGMP transport in Malpighian tubule principal cells. This Drosophila pseudoobscura pseudoobscura (Fruit fly) protein is cGMP-specific 3',5'-cyclic phosphodiesterase.